Consider the following 347-residue polypeptide: MDTVIELSKLLFKGNASCTSTPTLKTARIMESAVTGITLTTSIPMIIIVVTTMILYHRVAKHNATSFYVITLFASDFVLMWCVFFMTVNRKQLFSFNRFFCQLVYFIYHAVCSYSISMLAIIATIRYKTLHRRKKTESKTSSTGRNIGILLLASSMCAIPTALFVKTNGMKKTGKCVVYISSKKAYELFLAVKIVFSFIWGVLPTMVFSFFYVIFCKALHDVTEKKYKKTLFFIRILLLSFLLIQIPYIAILICEIAFLYMPQNTCFWLARVEILQLIIRLMPQVHCFSNPLVYAFTGGELRNRFTACFQSFFPKTLCSTQKRKDSDASEHDQNSKSKASVEKNQPL.

The next 6 helical transmembrane spans lie at 36–56 (GITL…MILY), 67–87 (FYVI…FFMT), 103–124 (LVYF…IIAT), 147–167 (IGIL…FVKT), 194–214 (IVFS…FYVI), and 236–256 (ILLL…ICEI). An intrachain disulfide couples Cys-101 to Cys-176. Residues 321–347 (QKRKDSDASEHDQNSKSKASVEKNQPL) are disordered. Residues 322 to 341 (KRKDSDASEHDQNSKSKASV) show a composition bias toward basic and acidic residues.

The protein belongs to the G-protein coupled receptor 1 family.

Its subcellular location is the membrane. Functionally, probable G-protein coupled receptor. The sequence is that of G-protein coupled receptor homolog U12 (U12) from Homo sapiens (Human).